We begin with the raw amino-acid sequence, 212 residues long: NADH dehydrogenase [ubiquinone] iron-sulfur protein 8, mitochondrial (212 aa).

The transit peptide at Met-1 to Ala-34 directs the protein to the mitochondrion. 2 consecutive 4Fe-4S ferredoxin-type domains span residues Arg-104–Glu-133 and Thr-143–Asn-172. Residues Cys-113, Cys-116, Cys-119, Cys-123, Cys-152, Cys-155, Cys-158, and Cys-162 each contribute to the [4Fe-4S] cluster site.

This sequence belongs to the complex I 23 kDa subunit family. In terms of assembly, complex I is composed of 45 different subunits. This is a component of the iron-sulfur (IP) fragment of the enzyme. Interacts with RAB5IF. It depends on [4Fe-4S] cluster as a cofactor.

Its subcellular location is the mitochondrion inner membrane. It catalyses the reaction a ubiquinone + NADH + 5 H(+)(in) = a ubiquinol + NAD(+) + 4 H(+)(out). Its function is as follows. Core subunit of the mitochondrial membrane respiratory chain NADH dehydrogenase (Complex I) which catalyzes electron transfer from NADH through the respiratory chain, using ubiquinone as an electron acceptor. Essential for the catalytic activity and assembly of complex I. The polypeptide is NADH dehydrogenase [ubiquinone] iron-sulfur protein 8, mitochondrial (Ndufs8) (Mus musculus (Mouse)).